Here is a 216-residue protein sequence, read N- to C-terminus: Probable GTP-binding protein EngB (216 aa).

The EngB-type G domain maps to 37 to 214; that stretch reads DGLEVAFAGR…RAAMIRLLDE (178 aa). GTP is bound by residues 45-52, 72-76, 92-95, 159-162, and 193-195; these read GRSNVGKS, GRTQE, DMPG, TKAD, and TSS. Ser52 and Thr74 together coordinate Mg(2+).

Belongs to the TRAFAC class TrmE-Era-EngA-EngB-Septin-like GTPase superfamily. EngB GTPase family. Mg(2+) is required as a cofactor.

Its function is as follows. Necessary for normal cell division and for the maintenance of normal septation. The chain is Probable GTP-binding protein EngB from Rhodopseudomonas palustris (strain HaA2).